A 371-amino-acid polypeptide reads, in one-letter code: Putative glutamate--cysteine ligase 2 (371 aa).

Belongs to the glutamate--cysteine ligase type 2 family. YbdK subfamily.

The catalysed reaction is L-cysteine + L-glutamate + ATP = gamma-L-glutamyl-L-cysteine + ADP + phosphate + H(+). ATP-dependent carboxylate-amine ligase which exhibits weak glutamate--cysteine ligase activity. The protein is Putative glutamate--cysteine ligase 2 of Burkholderia lata (strain ATCC 17760 / DSM 23089 / LMG 22485 / NCIMB 9086 / R18194 / 383).